Consider the following 63-residue polypeptide: Large ribosomal subunit protein uL29 (63 aa).

The protein belongs to the universal ribosomal protein uL29 family.

This chain is Large ribosomal subunit protein uL29, found in Actinobacillus succinogenes (strain ATCC 55618 / DSM 22257 / CCUG 43843 / 130Z).